Consider the following 209-residue polypeptide: 2,3-bisphosphoglycerate-dependent phosphoglycerate mutase (209 aa).

Substrate contacts are provided by residues 8–15 (RHGQSEGN), 21–22 (TG), R60, 87–90 (ERDY), K98, 114–115 (RR), and 158–159 (GN). H9 acts as the Tele-phosphohistidine intermediate in catalysis. E87 serves as the catalytic Proton donor/acceptor.

The protein belongs to the phosphoglycerate mutase family. BPG-dependent PGAM subfamily. Homodimer.

The enzyme catalyses (2R)-2-phosphoglycerate = (2R)-3-phosphoglycerate. The protein operates within carbohydrate degradation; glycolysis; pyruvate from D-glyceraldehyde 3-phosphate: step 3/5. Catalyzes the interconversion of 2-phosphoglycerate and 3-phosphoglycerate. The polypeptide is 2,3-bisphosphoglycerate-dependent phosphoglycerate mutase (Rhizobium etli (strain ATCC 51251 / DSM 11541 / JCM 21823 / NBRC 15573 / CFN 42)).